The primary structure comprises 205 residues: Lymphotoxin-alpha (205 aa).

The first 34 residues, 1-34 (MTPPERLFLPRVRGTTLHLLLLGLLLVLLPGAQG), serve as a signal peptide directing secretion. Residue Thr41 is glycosylated (O-linked (GalNAc...) threonine). A THD domain is found at 63 to 205 (PAAHLIGDPS…STVFFGAFAL (143 aa)). Asn96 is a glycosylation site (N-linked (GlcNAc...) asparagine).

It belongs to the tumor necrosis factor family. Homotrimer, and heterotrimer of either two LTB and one LTA subunits or (less prevalent) two LTA and one LTB subunits. Interacts with TNFRSF14.

Its subcellular location is the secreted. The protein resides in the membrane. Cytokine that in its homotrimeric form binds to TNFRSF1A/TNFR1, TNFRSF1B/TNFBR and TNFRSF14/HVEM. In its heterotrimeric form with LTB binds to TNFRSF3/LTBR. Lymphotoxin is produced by lymphocytes and is cytotoxic for a wide range of tumor cells in vitro and in vivo. The polypeptide is Lymphotoxin-alpha (LTA) (Pan troglodytes (Chimpanzee)).